The following is a 777-amino-acid chain: Dynamin-like protein ARC5 (777 aa).

Positions 45–343 (PFEAPAVLVV…LWKRYKESVP (299 aa)) constitute a Dynamin-type G domain. Positions 55–62 (GQQTDGKS) are G1 motif. Position 55 to 62 (55 to 62 (GQQTDGKS)) interacts with GTP. The interval 81–83 (KTR) is G2 motif. The interval 160 to 163 (DTPG) is G3 motif. GTP contacts are provided by residues 160–164 (DTPGL) and 231–234 (TKLD). The tract at residues 231 to 234 (TKLD) is G4 motif. The interval 265-268 (SPFF) is G5 motif. 2 coiled-coil regions span residues 300–320 (EDIA…EKSR) and 728–765 (NLRQ…NSHE).

Belongs to the TRAFAC class dynamin-like GTPase superfamily. Dynamin/Fzo/YdjA family. In terms of assembly, forms a homodimer and heterodimers with DRP3A and DRP3B on peroxisomes. Also interacts with FIS1A (but not FIS1B) and PEX11 proteins (PEX11A, PEX11B, PEX11C, PEX11D and PEX11E) on peroxisomes. Interacts with PDV1 and PDV2. Stabilized at the plastid outer envelope membranes (OEMs) in the constriction site when in complex with GTP, but destabilized after conversion of GTP into GDP leading to turnover with a cytosolic pool.

Its subcellular location is the cytoplasm. The protein resides in the plastid. The protein localises to the chloroplast outer membrane. It localises to the peroxisome. It is found in the cytosol. It carries out the reaction GTP + H2O = GDP + phosphate + H(+). GTPase activity is repressed by PDV2 thus increasing stability at the plastid outer envelope membranes (OEMs) periphery. Functionally, mechanochemical GTPase component of both plastid and peroxisome division machinery. Required for the last steps of plastid division specifically in mesophyll-cell, when the narrow isthmus breaks, facilitating the separation of the daughter plastids. Necessary for peroxisome activities. Seems to influence stromule (stroma-filled tubular extensions of the plastid envelope membrane) length and frequency. The sequence is that of Dynamin-like protein ARC5 from Arabidopsis thaliana (Mouse-ear cress).